A 471-amino-acid chain; its full sequence is Siroheme synthase (471 aa).

The tract at residues M1 to L203 is precorrin-2 dehydrogenase /sirohydrochlorin ferrochelatase. NAD(+) is bound by residues E22–V23 and K43–N44. Residue S128 is modified to Phosphoserine. The uroporphyrinogen-III C-methyltransferase stretch occupies residues G215–A471. Residue P224 participates in S-adenosyl-L-methionine binding. The Proton acceptor role is filled by D247. Catalysis depends on K269, which acts as the Proton donor. S-adenosyl-L-methionine-binding positions include G300–D302, I305, T330–A331, M382, and A411.

This sequence in the N-terminal section; belongs to the precorrin-2 dehydrogenase / sirohydrochlorin ferrochelatase family. It in the C-terminal section; belongs to the precorrin methyltransferase family.

The catalysed reaction is uroporphyrinogen III + 2 S-adenosyl-L-methionine = precorrin-2 + 2 S-adenosyl-L-homocysteine + H(+). The enzyme catalyses precorrin-2 + NAD(+) = sirohydrochlorin + NADH + 2 H(+). It carries out the reaction siroheme + 2 H(+) = sirohydrochlorin + Fe(2+). It participates in cofactor biosynthesis; adenosylcobalamin biosynthesis; precorrin-2 from uroporphyrinogen III: step 1/1. The protein operates within cofactor biosynthesis; adenosylcobalamin biosynthesis; sirohydrochlorin from precorrin-2: step 1/1. It functions in the pathway porphyrin-containing compound metabolism; siroheme biosynthesis; precorrin-2 from uroporphyrinogen III: step 1/1. Its pathway is porphyrin-containing compound metabolism; siroheme biosynthesis; siroheme from sirohydrochlorin: step 1/1. It participates in porphyrin-containing compound metabolism; siroheme biosynthesis; sirohydrochlorin from precorrin-2: step 1/1. Its function is as follows. Multifunctional enzyme that catalyzes the SAM-dependent methylations of uroporphyrinogen III at position C-2 and C-7 to form precorrin-2 via precorrin-1. Then it catalyzes the NAD-dependent ring dehydrogenation of precorrin-2 to yield sirohydrochlorin. Finally, it catalyzes the ferrochelation of sirohydrochlorin to yield siroheme. The polypeptide is Siroheme synthase (Zymomonas mobilis subsp. mobilis (strain ATCC 31821 / ZM4 / CP4)).